The sequence spans 109 residues: Nucleoid-associated protein VS_0917 (109 aa).

Disordered regions lie at residues 1–22 (MFGKGGMGNMMKQAQQMQERMQ) and 88–109 (QKEKMAGVTGGMQLPPGMKMPF). The segment covering 9-18 (NMMKQAQQMQ) has biased composition (low complexity).

The protein belongs to the YbaB/EbfC family. Homodimer.

The protein resides in the cytoplasm. It is found in the nucleoid. In terms of biological role, binds to DNA and alters its conformation. May be involved in regulation of gene expression, nucleoid organization and DNA protection. The chain is Nucleoid-associated protein VS_0917 from Vibrio atlanticus (strain LGP32) (Vibrio splendidus (strain Mel32)).